The primary structure comprises 674 residues: Protein asunder (674 aa).

Residues 516-538 (HKAKDQYRLLYRELEQLIQLNAS) are a coiled coil. The disordered stretch occupies residues 560–579 (PSKSEAGTANLRSFTESPLS). Polar residues predominate over residues 564 to 577 (EAGTANLRSFTESP). The Nuclear localization signal (NLS) signature appears at 601–607 (LKASKRR).

This sequence belongs to the Integrator subunit 13 family. As to quaternary structure, belongs to the multiprotein complex Integrator, at least composed of IntS1, IntS2, IntS3, IntS4, omd/IntS5, IntS6, defl/IntS7, IntS8, IntS9, IntS10, IntS11, IntS12, asun/IntS13, IntS14 and IntS15. The core complex associates with protein phosphatase 2A subunits mts/PP2A and Pp2A-29B, to form the Integrator-PP2A (INTAC) complex. Post-translationally, phosphorylated.

It localises to the nucleus. Its subcellular location is the cytoplasm. It is found in the perinuclear region. Its function is as follows. Component of the integrator complex, a multiprotein complex that terminates RNA polymerase II (Pol II) transcription in the promoter-proximal region of genes. The integrator complex provides a quality checkpoint during transcription elongation by driving premature transcription termination of transcripts that are unfavorably configured for transcriptional elongation: the complex terminates transcription by (1) catalyzing dephosphorylation of the C-terminal domain (CTD) of Pol II subunit Polr2A/Rbp1 and Spt5, and (2) degrading the exiting nascent RNA transcript via endonuclease activity. The integrator complex is also involved in the 3'-end processing of the U7 snRNA, and also the spliceosomal snRNAs U1, U2, U4 and U5. This is Protein asunder (asun) from Drosophila pseudoobscura pseudoobscura (Fruit fly).